We begin with the raw amino-acid sequence, 238 residues long: Uridylate kinase (238 aa).

12-15 (KLSG) is a binding site for ATP. Positions 20-25 (GDEGFG) are involved in allosteric activation by GTP. Gly54 lines the UMP pocket. Gly55 and Arg59 together coordinate ATP. UMP-binding positions include Asp74 and 135–142 (TGSPFFTT). 3 residues coordinate ATP: Thr162, Tyr168, and Asp171.

This sequence belongs to the UMP kinase family. As to quaternary structure, homohexamer.

Its subcellular location is the cytoplasm. The enzyme catalyses UMP + ATP = UDP + ADP. The protein operates within pyrimidine metabolism; CTP biosynthesis via de novo pathway; UDP from UMP (UMPK route): step 1/1. With respect to regulation, allosterically activated by GTP. Inhibited by UTP. Its function is as follows. Catalyzes the reversible phosphorylation of UMP to UDP. This chain is Uridylate kinase, found in Histophilus somni (strain 129Pt) (Haemophilus somnus).